A 170-amino-acid polypeptide reads, in one-letter code: Photosystem II extrinsic protein V (170 aa).

The signal sequence occupies residues 1–33 (MASLFASLGRSLIKLLIVLPVIIGLSISSPAMA). Positions 70, 73, 74, and 125 each coordinate heme c.

This sequence belongs to the cytochrome c family. PsbV subfamily. PSII is composed of 1 copy each of membrane proteins PsbA, PsbB, PsbC, PsbD, PsbE, PsbF, PsbH, PsbI, PsbJ, PsbK, PsbL, PsbM, PsbT, PsbX, PsbY, Psb30/Ycf12, peripheral proteins PsbO, CyanoQ (PsbQ), PsbU, PsbV and a large number of cofactors. It forms dimeric complexes. Heme c serves as cofactor.

It localises to the cellular thylakoid membrane. One of the extrinsic, lumenal subunits of photosystem II (PSII). PSII is a light-driven water plastoquinone oxidoreductase, using light energy to abstract electrons from H(2)O, generating a proton gradient subsequently used for ATP formation. The extrinsic proteins stabilize the structure of photosystem II oxygen-evolving complex (OEC), the ion environment of oxygen evolution and protect the OEC against heat-induced inactivation. Low-potential cytochrome c that plays a role in the OEC of PSII. This is Photosystem II extrinsic protein V from Prochlorococcus marinus (strain MIT 9313).